The primary structure comprises 321 residues: Agamous-like MADS-box protein AGL80 (321 aa).

In terms of domain architecture, MADS-box spans 1-61; sequence MTRKKVKLAY…DTNPEVWPSN (61 aa). The stretch at 89–114 forms a coiled coil; that stretch reads FLKQRIAKATETLRRQRKDSRELEMT.

In terms of assembly, interacts with AGL61 and AGL62. Forms a heterodimer with AGL61. Interacts with MEE14/CBP1. Expressed in the central cell of the female gametophyte and in early endosperm. Also detected in ovaries, young siliques, roots, leaves, stems, young flowers and anthers.

Its subcellular location is the nucleus. Functionally, probable transcription factor. Controls central cell differentiation during female gametophyte development. Required for the expression of DEMETER and DD46, but not for the expression of FIS2. Probable transcription factor that may function in the maintenance of the proper function of the central cell in pollen tube attraction. This is Agamous-like MADS-box protein AGL80 (AGL80) from Arabidopsis thaliana (Mouse-ear cress).